Here is a 128-residue protein sequence, read N- to C-terminus: Fluoride-specific ion channel FluC (128 aa).

4 consecutive transmembrane segments (helical) span residues 5-25, 34-54, 67-87, and 99-119; these read LFISCGAILGASLRWAIGLLF, FGTLIANLFGCLIIGVLLGLF, FLITGFLGSLTTFSSFSSEVV, and FCVLMMHLFGCLAMTVLGIWI. Residues Gly-74 and Thr-77 each coordinate Na(+).

Belongs to the fluoride channel Fluc/FEX (TC 1.A.43) family.

It localises to the cell inner membrane. It carries out the reaction fluoride(in) = fluoride(out). With respect to regulation, na(+) is not transported, but it plays an essential structural role and its presence is essential for fluoride channel function. Fluoride-specific ion channel. Important for reducing fluoride concentration in the cell, thus reducing its toxicity. This chain is Fluoride-specific ion channel FluC, found in Haemophilus influenzae (strain PittGG).